The sequence spans 66 residues: Stress-associated endoplasmic reticulum protein 1 (66 aa).

A disordered region spans residues 1–33 (MVAKQRIRMANEKHSKNITQRGNVAKTSRNAPG). The Cytoplasmic portion of the chain corresponds to 1 to 38 (MVAKQRIRMANEKHSKNITQRGNVAKTSRNAPGEKASV). Polar residues predominate over residues 17 to 30 (NITQRGNVAKTSRN). A helical membrane pass occupies residues 39 to 59 (GPWLLALFIFVVCGSAIFQII). Residues 60 to 66 (QSIRMGM) lie on the Extracellular side of the membrane.

It belongs to the RAMP4 family. Interacts with SEC61B, SEC61A1 and the SEC61 complex. Interacts with CANX.

It is found in the membrane. It localises to the endoplasmic reticulum membrane. In terms of biological role, interacts with target proteins during their translocation into the lumen of the endoplasmic reticulum. Protects unfolded target proteins against degradation during ER stress. May facilitate glycosylation of target proteins after termination of ER stress. May modulate the use of N-glycosylation sites on target proteins. The protein is Stress-associated endoplasmic reticulum protein 1 (SERP1) of Pongo abelii (Sumatran orangutan).